A 1319-amino-acid polypeptide reads, in one-letter code: DNA-directed RNA polymerase subunit beta' (1319 aa).

Residues C59, C61, C74, and C77 each contribute to the Zn(2+) site. 3 residues coordinate Mg(2+): D449, D451, and D453. Zn(2+)-binding residues include C773, C846, C853, and C856.

The protein belongs to the RNA polymerase beta' chain family. As to quaternary structure, the RNAP catalytic core consists of 2 alpha, 1 beta, 1 beta' and 1 omega subunit. When a sigma factor is associated with the core the holoenzyme is formed, which can initiate transcription. It depends on Mg(2+) as a cofactor. Zn(2+) is required as a cofactor.

It catalyses the reaction RNA(n) + a ribonucleoside 5'-triphosphate = RNA(n+1) + diphosphate. Functionally, DNA-dependent RNA polymerase catalyzes the transcription of DNA into RNA using the four ribonucleoside triphosphates as substrates. This Fusobacterium nucleatum subsp. nucleatum (strain ATCC 25586 / DSM 15643 / BCRC 10681 / CIP 101130 / JCM 8532 / KCTC 2640 / LMG 13131 / VPI 4355) protein is DNA-directed RNA polymerase subunit beta'.